The primary structure comprises 656 residues: Protein EMBRYO SAC DEVELOPMENT ARREST 30 (656 aa).

Residues 9–29 (WIALFVLILSMGSLVVHLSMT) traverse the membrane as a helical; Signal-anchor for type II membrane protein segment. Asparagine 119 is a glycosylation site (N-linked (GlcNAc...) asparagine). A disordered region spans residues 381–426 (LSELVGPETPLPENTYKMPPRKSDKQLKEEWNKAGPRPRPLPPPPD). Positions 401 to 412 (RKSDKQLKEEWN) are enriched in basic and acidic residues. Positions 417–426 (RPRPLPPPPD) are enriched in pro residues. Residues asparagine 444, asparagine 522, asparagine 534, and asparagine 544 are each glycosylated (N-linked (GlcNAc...) asparagine). A disordered region spans residues 631-656 (SETEEEFAKSKVASAFDQDEEWDPND). A compositionally biased stretch (acidic residues) spans 647–656 (DQDEEWDPND).

Belongs to the glycosyltransferase GT106 family.

It is found in the membrane. It participates in glycan metabolism. This Arabidopsis thaliana (Mouse-ear cress) protein is Protein EMBRYO SAC DEVELOPMENT ARREST 30.